The chain runs to 202 residues: Transmembrane 4 L6 family member 4 (202 aa).

Residues 1 to 9 are Cytoplasmic-facing; sequence MCTGGCARC. A helical membrane pass occupies residues 10 to 30; sequence LGGTLIPLAFFGFLANILLFF. Topologically, residues 31-45 are extracellular; it reads PGGKVIDDNDHLSQE. Residues 46-66 traverse the membrane as a helical segment; that stretch reads IWFFGGILGSGVLMIFPALVF. Residues 67 to 93 lie on the Cytoplasmic side of the membrane; the sequence is LGLKNNDCCGCCGNEGCGKRFAMFTST. Residues 94 to 114 traverse the membrane as a helical segment; the sequence is IFAVVGFLGAGYSFIISAISI. Over 115–158 the chain is Extracellular; sequence NKGPKCLMANSTWGYPFHDGDYLNDEALWNKCREPLNVVPWNLT. N-linked (GlcNAc...) asparagine glycans are attached at residues asparagine 124 and asparagine 156. Residues 159–179 traverse the membrane as a helical segment; the sequence is LFSILLVVGGIQMVLCAIQVV. At 180-202 the chain is on the cytoplasmic side; sequence NGLLGTLCGDCQCCGCCGGDGPV.

It belongs to the L6 tetraspanin family. In terms of processing, N-glycosylated. Glycosylation is required for the growth inhibitory effect. Jejunum and liver.

The protein resides in the membrane. Functionally, regulates the adhesive and proliferative status of intestinal epithelial cells. Can mediate density-dependent cell proliferation. In Homo sapiens (Human), this protein is Transmembrane 4 L6 family member 4 (TM4SF4).